Here is a 29-residue protein sequence, read N- to C-terminus: GLPTCGETCFKGKCYTPGCSCSYPICKKN.

The segment at residues 1–29 (GLPTCGETCFKGKCYTPGCSCSYPICKKN) is a cross-link (cyclopeptide (Gly-Asn)). 3 disulfides stabilise this stretch: cysteine 5-cysteine 19, cysteine 9-cysteine 21, and cysteine 14-cysteine 26.

This is a cyclic peptide. Post-translationally, contains 3 disulfide bonds.

Probably participates in a plant defense mechanism (Potential). Binds to and induces leakage in phospholipd membranes, particularly ones containing 1-palmitoyl-2-oleophosphatidylethanolamine (POPE). In vitro, displays cytotoxicity against cultured cells but no hemolytic activity towards fresh erythrocytes. Not active against Gram-negative bacterium E.coli ATCC 25922 or Gram-positive bacterium S.aureus ATCC 25923 up to a concentration of 64 uM. The protein is Cyclotide mela-7 of Melicytus latifolius (Norfolk Island mahoe).